The primary structure comprises 406 residues: Putative 12-oxophytodienoate reductase 12 (406 aa).

FMN contacts are provided by residues 41-43 (PLT), Ala74, and Gln119. 188–191 (HAAN) provides a ligand contact to substrate. Residues Arg240, Gly317, and 338–339 (GR) each bind FMN.

It belongs to the NADH:flavin oxidoreductase/NADH oxidase family. Requires FMN as cofactor.

Functionally, putative oxophytodienoate reductase that may be involved in the biosynthesis or metabolism of oxylipin signaling molecules. This chain is Putative 12-oxophytodienoate reductase 12 (OPR12), found in Oryza sativa subsp. japonica (Rice).